Reading from the N-terminus, the 800-residue chain is Internalin A (800 aa).

The signal sequence occupies residues 1 to 35; that stretch reads MRKKRYVWLKSILVAILVFGSGVWINTSNGTNAQA. An LRRNT domain is found at 36-76; sequence ATITQDTPINQIFTDAALAEKMKTVLGKTNVTDTVSQTDLD. LRR repeat units lie at residues 77–98, 99–120, 121–142, 143–164, 165–186, 187–207, 208–229, 230–251, 252–273, 274–295, 296–317, 318–339, 340–361, 362–383, and 384–405; these read QVTT…EYLN, NLTQ…KDLT, KLVD…ANLT, NLTG…KNLT, NLNR…SGLT, NLQQ…ANLT, TLER…AKLT, NLES…GILT, NLDE…ASLT, NLTD…SGLT, KLTE…AGLT, ALTN…SNLK, NLTY…SSLT, KLQR…ANLT, and NINW…ANLT. Residues 416–505 enclose the LRRCT domain; the sequence is AWTNAPVNYK…AIFNAKFHVD (90 aa). One copy of the B-1 repeat lies at 518–587; it reads LLTEPAKPVK…TTSQTVDYQG (70 aa). The interval 518-706 is 3 X approximate tandem repeats, type B; the sequence is LLTEPAKPVK…ITLYAQFTKN (189 aa). The B-2 repeat unit spans residues 588–657; it reads LLQEPTPPTK…STTQAVDYQG (70 aa). One copy of the B-3 repeat lies at 658–706; that stretch reads LLKEPKAPTKAGYTFKGWYDEKTDGKKWDFATDKMPANDITLYAQFTKN. The segment at 705–757 is disordered; the sequence is KNPVAPPTTGGNTPPTTNNGGNTTPPSANIPGSDTSNTSTGNSASTTSTMNAY. A compositionally biased stretch (low complexity) spans 711-753; the sequence is PTTGGNTPPTTNNGGNTTPPSANIPGSDTSNTSTGNSASTTST. Positions 767–771 match the LPXTG sorting signal motif; it reads LPTTG. Pentaglycyl murein peptidoglycan amidated threonine is present on T770. The propeptide at 771–800 is removed by sortase A; that stretch reads GDSDNALYLLLGLLAVGTAMALTKKARASK.

It belongs to the internalin family.

It is found in the secreted. Its subcellular location is the cell wall. Mediates the entry of Listeria monocytogenes into cells. Binds to host receptor cadherin-1 (E-cadherin, CDH1). This chain is Internalin A (inlA), found in Listeria monocytogenes serotype 1/2a (strain 10403S).